The chain runs to 1495 residues: Ras GTPase-activating-like protein IQG1 (1495 aa).

Residues 108–221 (LCRVSEVKIW…ILISMINKKW (114 aa)) enclose the Calponin-homology (CH) domain. The residue at position 264 (Thr-264) is a Phosphothreonine. Ser-268 bears the Phosphoserine mark. Thr-299 bears the Phosphothreonine mark. IQ domains lie at 447-467 (EQDILRFQACLRGNKFRVLSS), 538-567 (SHYPLTKLQSYMRASYVRKKVMSLNTKLND), 568-597 (ERESIMKFSAIIRGNVVRCSEDAILSAVHD), 599-628 (HKENISKLQSLIRGIFTRSCLASIIYSLGK), 629-658 (ENCNIIQLSACIRGNAVRHKVQSLFAPENN), 687-716 (EYNNLALFQAFSRGALVRESLDQKSSFYKR), and 717-746 (NVRSVIMIQSWIRKSLQRSAYLELLDCPNP). Residues 759–798 (NGTATIEEVQNQLESCQASLDSENMKKERLLKSIRQQLNI) adopt a coiled-coil conformation. Residues 876–1100 (SYFTRFVCEM…PHIKDVLYNV (225 aa)) enclose the Ras-GAP domain.

In terms of assembly, interacts with AFR1. Interacts with AKR1. Interacts with activated CDC42. Interacts with calmodulin CMD1. Interacts with myosin MYO1 and its light chain MLC1. Interacts with BUD4. Interacts with INN1. Interacts with SEC3. Interacts with TEM1.

It is found in the bud neck. Functionally, required for the assembly and the contraction of the actomyosin ring at the bud neck during cytokinesis. Seems to be involved in additional tasks during cell division like axial bud-site selection and targeted secretion by recruiting the spatial landmark BUD4, the septin CDC12 and the secretion landmark SEC3 to the bud neck. May be regulated by calcium ions. The chain is Ras GTPase-activating-like protein IQG1 (IQG1) from Saccharomyces cerevisiae (strain ATCC 204508 / S288c) (Baker's yeast).